Here is an 885-residue protein sequence, read N- to C-terminus: Putative membrane protein YdgH (885 aa).

Helical transmembrane passes span 9 to 29 (WAIA…SPNL), 181 to 201 (IIGL…PIVV), 202 to 222 (VGFS…NVDF), 227 to 247 (FTQT…CILL), 278 to 298 (ISGF…FAIF), 304 to 324 (VAVG…LFMV), and 354 to 374 (VARP…FILT). Positions 498 to 518 (MAGQTGSASNGGSGGSLGDAA) are disordered. 5 helical membrane passes run 716-736 (MVIM…SMIM), 740-760 (MIAS…LIFV), 772-792 (VPFF…IFLL), 817-837 (VIIT…PSGV), and 847-867 (IIIG…PAII).

It belongs to the resistance-nodulation-cell division (RND) (TC 2.A.6) family. MmpL subfamily.

The protein localises to the cell membrane. This chain is Putative membrane protein YdgH (ydgH), found in Bacillus subtilis (strain 168).